We begin with the raw amino-acid sequence, 342 residues long: Dihydroorotate dehydrogenase (quinone) (342 aa).

FMN is bound by residues 61-65 (AGLDK) and Thr85. Lys65 provides a ligand contact to substrate. A substrate-binding site is contributed by 110-114 (NRMGF). Asn138 and Asn171 together coordinate FMN. Asn171 contributes to the substrate binding site. Ser174 functions as the Nucleophile in the catalytic mechanism. Asn176 is a substrate binding site. FMN is bound by residues Lys216 and Thr244. Position 245–246 (245–246 (NT)) interacts with substrate. FMN is bound by residues Gly267, Gly296, and 317 to 318 (YS).

Belongs to the dihydroorotate dehydrogenase family. Type 2 subfamily. As to quaternary structure, monomer. Requires FMN as cofactor.

The protein localises to the cell membrane. The catalysed reaction is (S)-dihydroorotate + a quinone = orotate + a quinol. It functions in the pathway pyrimidine metabolism; UMP biosynthesis via de novo pathway; orotate from (S)-dihydroorotate (quinone route): step 1/1. Catalyzes the conversion of dihydroorotate to orotate with quinone as electron acceptor. In Pseudomonas aeruginosa (strain LESB58), this protein is Dihydroorotate dehydrogenase (quinone).